The chain runs to 416 residues: Homogentisate 1,2-dioxygenase (416 aa).

H275 (proton acceptor) is an active-site residue. Residues H318 and E324 each coordinate Fe cation. 2 residues coordinate homogentisate: Y333 and H354. A Fe cation-binding site is contributed by H354.

The protein belongs to the homogentisate dioxygenase family. In terms of assembly, hexamer; dimer of trimers. Fe cation is required as a cofactor.

It carries out the reaction homogentisate + O2 = 4-maleylacetoacetate + H(+). The protein operates within amino-acid degradation; L-phenylalanine degradation; acetoacetate and fumarate from L-phenylalanine: step 4/6. Functionally, involved in the catabolism of homogentisate (2,5-dihydroxyphenylacetate or 2,5-OH-PhAc), a central intermediate in the degradation of phenylalanine and tyrosine. Catalyzes the oxidative ring cleavage of the aromatic ring of homogentisate to yield maleylacetoacetate. The polypeptide is Homogentisate 1,2-dioxygenase (Legionella pneumophila subsp. pneumophila (strain Philadelphia 1 / ATCC 33152 / DSM 7513)).